We begin with the raw amino-acid sequence, 145 residues long: MKGLLQRVRGARVEVAGEIVGAIDQGLLVLVAVEPEDTREQADKLLHKLLNYRVFSDEQGKMNLSLKDVGGGLLLVSQFTLAADTRSGMRPSFSTAAPPALGAELFDYLLQQAQGQHADVASGRFGADMQVHLVNDGPVTFLLQI.

The Gly-cisPro motif, important for rejection of L-amino acids motif lies at 137–138 (GP).

Belongs to the DTD family. Homodimer.

The protein localises to the cytoplasm. The catalysed reaction is glycyl-tRNA(Ala) + H2O = tRNA(Ala) + glycine + H(+). The enzyme catalyses a D-aminoacyl-tRNA + H2O = a tRNA + a D-alpha-amino acid + H(+). An aminoacyl-tRNA editing enzyme that deacylates mischarged D-aminoacyl-tRNAs. Also deacylates mischarged glycyl-tRNA(Ala), protecting cells against glycine mischarging by AlaRS. Acts via tRNA-based rather than protein-based catalysis; rejects L-amino acids rather than detecting D-amino acids in the active site. By recycling D-aminoacyl-tRNA to D-amino acids and free tRNA molecules, this enzyme counteracts the toxicity associated with the formation of D-aminoacyl-tRNA entities in vivo and helps enforce protein L-homochirality. The protein is D-aminoacyl-tRNA deacylase of Pseudomonas putida (strain W619).